The sequence spans 213 residues: Orotate phosphoribosyltransferase (213 aa).

Lys26 contributes to the 5-phospho-alpha-D-ribose 1-diphosphate binding site. Residue 34-35 (FF) participates in orotate binding. Residues 72-73 (YK), Arg99, Lys100, Lys103, His105, and 124-132 (DDVITAGTA) each bind 5-phospho-alpha-D-ribose 1-diphosphate. 2 residues coordinate orotate: Thr128 and Arg156.

This sequence belongs to the purine/pyrimidine phosphoribosyltransferase family. PyrE subfamily. As to quaternary structure, homodimer. Mg(2+) is required as a cofactor.

The enzyme catalyses orotidine 5'-phosphate + diphosphate = orotate + 5-phospho-alpha-D-ribose 1-diphosphate. The protein operates within pyrimidine metabolism; UMP biosynthesis via de novo pathway; UMP from orotate: step 1/2. Functionally, catalyzes the transfer of a ribosyl phosphate group from 5-phosphoribose 1-diphosphate to orotate, leading to the formation of orotidine monophosphate (OMP). This is Orotate phosphoribosyltransferase from Actinobacillus pleuropneumoniae serotype 5b (strain L20).